The sequence spans 397 residues: MLNSLDLEGRPEDTRVVVAMSGGVDSSVTAALLKSQGYDVVGITLQLYDHGAATHRKGACCAGQDIHDARNVAERLGIPHYVLDYEDRFRESVIDNFAASYASGETPVPCIECNRAIKFGDLLKTARELGASVLATGHYVASRRLPDGSRALTCAADADRDQSYFLFATTREQLDYLRFPLGDMTKPEVRELARRFELEVADKHDSQDICFVPTGRYTDIIGKLRPNAMEPGEIVDLNGRVLGAHQGIANYTIGQRKGLGIAAGAPLYVVKLDVTTRRVVVGPREALRTHRITLREVNWIGDGALDAAVRDGLELFVRVRSTRAPQPAWLRGADGSYEVELVGGEEGVSPGQACVFYDAASGRARVLGGGFIQSAVAESSATAGLVRPQRVAEPVRG.

ATP contacts are provided by residues 19-26 (AMSGGVDS) and L45. Catalysis depends on C113, which acts as the Nucleophile. Residues C113 and C210 are joined by a disulfide bond. Position 137 (G137) interacts with ATP. The segment at 160 to 162 (RDQ) is interaction with tRNA. Residue C210 is the Cysteine persulfide intermediate of the active site.

This sequence belongs to the MnmA/TRMU family.

The protein resides in the cytoplasm. The enzyme catalyses S-sulfanyl-L-cysteinyl-[protein] + uridine(34) in tRNA + AH2 + ATP = 2-thiouridine(34) in tRNA + L-cysteinyl-[protein] + A + AMP + diphosphate + H(+). In terms of biological role, catalyzes the 2-thiolation of uridine at the wobble position (U34) of tRNA, leading to the formation of s(2)U34. The polypeptide is tRNA-specific 2-thiouridylase MnmA (Bradyrhizobium sp. (strain ORS 278)).